We begin with the raw amino-acid sequence, 572 residues long: Urocanate hydratase (572 aa).

NAD(+)-binding positions include 48–49 (GG), Q126, 172–174 (GMG), D192, 238–239 (NA), 259–263 (QTSAH), 268–269 (YL), and Y317. C405 is an active-site residue. G487 serves as a coordination point for NAD(+). The span at 550 to 559 (EGDEAHEGDA) shows a compositional bias: basic and acidic residues. A disordered region spans residues 550–572 (EGDEAHEGDAAHGSGAAREGDGV).

This sequence belongs to the urocanase family. NAD(+) serves as cofactor.

It localises to the cytoplasm. The enzyme catalyses 4-imidazolone-5-propanoate = trans-urocanate + H2O. It participates in amino-acid degradation; L-histidine degradation into L-glutamate; N-formimidoyl-L-glutamate from L-histidine: step 2/3. Functionally, catalyzes the conversion of urocanate to 4-imidazolone-5-propionate. The protein is Urocanate hydratase of Streptomyces coelicolor (strain ATCC BAA-471 / A3(2) / M145).